Reading from the N-terminus, the 305-residue chain is Protein-methionine-sulfoxide reductase catalytic subunit MsrP (305 aa).

Positions 1-54 (MLIRKPADHLPSEITSESVYFNRRQFMAGAAGLLLSAETLAGLAAKKSPLSQLA) form a signal peptide, tat-type signal. Mo-molybdopterin contacts are provided by residues Asn-69, 72-73 (YE), Cys-126, Thr-161, Asn-209, Arg-214, and 225-227 (SIK).

The protein belongs to the MsrP family. Heterodimer of a catalytic subunit (MsrP) and a heme-binding subunit (MsrQ). Requires Mo-molybdopterin as cofactor. Post-translationally, predicted to be exported by the Tat system. The position of the signal peptide cleavage has not been experimentally proven.

It localises to the periplasm. It carries out the reaction L-methionyl-[protein] + a quinone + H2O = L-methionyl-(S)-S-oxide-[protein] + a quinol. The enzyme catalyses L-methionyl-[protein] + a quinone + H2O = L-methionyl-(R)-S-oxide-[protein] + a quinol. Part of the MsrPQ system that repairs oxidized periplasmic proteins containing methionine sulfoxide residues (Met-O), using respiratory chain electrons. Thus protects these proteins from oxidative-stress damage caused by reactive species of oxygen and chlorine generated by the host defense mechanisms. MsrPQ is essential for the maintenance of envelope integrity under bleach stress, rescuing a wide series of structurally unrelated periplasmic proteins from methionine oxidation. The catalytic subunit MsrP is non-stereospecific, being able to reduce both (R-) and (S-) diastereoisomers of methionine sulfoxide. This Chromobacterium violaceum (strain ATCC 12472 / DSM 30191 / JCM 1249 / CCUG 213 / NBRC 12614 / NCIMB 9131 / NCTC 9757 / MK) protein is Protein-methionine-sulfoxide reductase catalytic subunit MsrP.